Here is a 418-residue protein sequence, read N- to C-terminus: NADH-quinone oxidoreductase subunit D (418 aa).

It belongs to the complex I 49 kDa subunit family. In terms of assembly, NDH-1 is composed of 14 different subunits. Subunits NuoB, C, D, E, F, and G constitute the peripheral sector of the complex.

It is found in the cell inner membrane. It carries out the reaction a quinone + NADH + 5 H(+)(in) = a quinol + NAD(+) + 4 H(+)(out). In terms of biological role, NDH-1 shuttles electrons from NADH, via FMN and iron-sulfur (Fe-S) centers, to quinones in the respiratory chain. The immediate electron acceptor for the enzyme in this species is believed to be ubiquinone. Couples the redox reaction to proton translocation (for every two electrons transferred, four hydrogen ions are translocated across the cytoplasmic membrane), and thus conserves the redox energy in a proton gradient. This chain is NADH-quinone oxidoreductase subunit D, found in Methylacidiphilum infernorum (isolate V4) (Methylokorus infernorum (strain V4)).